A 628-amino-acid chain; its full sequence is tRNA(Thr) (cytosine(32)-N(3))-methyltransferase (628 aa).

The span at 1–18 shows a compositional bias: basic and acidic residues; sequence MGVADLIKKFESISKEEG. 3 disordered regions span residues 1-106, 124-269, and 302-331; these read MGVA…GENA, AEVL…VNDL, and NIAH…TEGS. Residues 22-31 are compositionally biased toward polar residues; it reads VDTNSSSKPL. The span at 32 to 42 shows a compositional bias: basic and acidic residues; sequence KSNDETKELHQ. Over residues 53-62 the composition is skewed to acidic residues; that stretch reads DVNEEFENEP. A Phosphoserine modification is found at Ser-93. Positions 132–146 are enriched in acidic residues; the sequence is EESDAIQEGVAEETE. A Phosphothreonine modification is found at Thr-150. Over residues 173-186 the composition is skewed to acidic residues; that stretch reads PAEEYSQSEEDADI. Polar residues predominate over residues 196-207; the sequence is NAENASQQANDG. Residues 215-230 show a composition bias toward basic residues; the sequence is KNKKKKNKKKNKKKRN. Over residues 231-240 the composition is skewed to polar residues; that stretch reads GNVNTNANVD. 2 positions are modified to phosphoserine: Ser-321 and Ser-326. Phosphothreonine is present on Thr-347. The S-adenosyl-L-methionine site is built by Trp-399, Tyr-403, Gly-441, Asp-466, Asp-492, Leu-493, and Ile-515.

It belongs to the methyltransferase superfamily. METL family. Interacts with SES1.

It is found in the cytoplasm. It localises to the cytoskeleton. It carries out the reaction cytidine(32) in tRNA(Thr) + S-adenosyl-L-methionine = N(3)-methylcytidine(32) in tRNA(Thr) + S-adenosyl-L-homocysteine + H(+). The enzyme catalyses cytidine(32) in tRNA(Ser) + S-adenosyl-L-methionine = N(3)-methylcytidine(32) in tRNA(Ser) + S-adenosyl-L-homocysteine + H(+). In terms of biological role, S-adenosyl-L-methionine-dependent methyltransferase that mediates N(3)-methylcytidine modification of residue 32 of the tRNA anticodon loop of tRNA(Thr) and tRNA(Ser). N(3)-methylcytidine methylation of tRNA(Thr) requires the N6-threonylcarbamoylation of tRNA (t6A37) by the EKC/KEOPS complex as prerequisite. N(3)-methylcytidine methylation of tRNA(Ser) requires the formation of N(6)-dimethylallyladenosine(37) (i6A37) by MOD5 as prerequisite. Methylation of tRNA(Ser) is also stimulated by SES1. Binds F-actin and shows weak F-actin cross-linking activity. This is tRNA(Thr) (cytosine(32)-N(3))-methyltransferase (ABP140) from Saccharomyces cerevisiae (strain ATCC 204508 / S288c) (Baker's yeast).